The primary structure comprises 392 residues: MILTRCLPLIWLSLLTVCAAGRTLHPLPVKGPKTVKLQLQTSRPYNIAHRGSNGEIPEETTAAYLKAIEEGTDFIETDILSSKDGVLICFHDCILDETTNVASHKEFADRKRTYDVQGFNITGFFTFDFTLKELKQLRIKQRYAFRDQQYNGMYPIITFEEFLTIARDAPRVVGIYPEIKNPVLMNQHVKWPGGKKFEDKVVETLKKYGYGGSYLSKKWLKKPLFIQSFAPTSLVYISNLTDSPKVLLIDDVTMPTQDTNQTYAEITSDAYFEYIKQYVVGIGPWKDTIVPVNNNYVLAPTDLVKRAHAHNLQVHPYTYRNEHEFLHYNFSQDPYKEYDYWINEIGVDGLFTDFTGSLHNFQEWTSPLPDTSKSPRQLLSQIASLVLPYAKA.

The first 21 residues, 1-21, serve as a signal peptide directing secretion; it reads MILTRCLPLIWLSLLTVCAAG. Positions 44-362 constitute a GP-PDE domain; that stretch reads PYNIAHRGSN…DFTGSLHNFQ (319 aa). 4 N-linked (GlcNAc...) asparagine glycosylation sites follow: Asn-120, Asn-239, Asn-260, and Asn-329.

Belongs to the glycerophosphoryl diester phosphodiesterase family. As to expression, expressed in roots, rosette and cauline leaves, stems, flowers and siliques.

The protein resides in the secreted. Its subcellular location is the cell wall. It localises to the vacuole. It carries out the reaction a sn-glycero-3-phosphodiester + H2O = an alcohol + sn-glycerol 3-phosphate + H(+). This Arabidopsis thaliana (Mouse-ear cress) protein is Glycerophosphodiester phosphodiesterase GDPD5.